Here is a 236-residue protein sequence, read N- to C-terminus: uncharacterized protein (236 aa).

A helical transmembrane segment spans residues 52-72; it reads FFPYIALFQIIMLIILLILYF. Residues 183-236 form a disordered region; the sequence is SDKREHDDEELSFTTEMETITTETETSSTIPHLRSLPIKSESSMETTSEETDEE. Over residues 196–212 the composition is skewed to low complexity; it reads TTEMETITTETETSSTI.

It localises to the membrane. This is an uncharacterized protein from Acheta domesticus (House cricket).